Consider the following 96-residue polypeptide: MVGAYYVGIALLVAGGSQTAAGVDQYDLEQTPDNGFSRLLALDEMLRSRFLRKSRNPKDNLMLSEANEERTPSSPSNSLTEFIVSEPITTNVMRTE.

Positions 1 to 22 (MVGAYYVGIALLVAGGSQTAAG) are cleaved as a signal peptide. A RxLR-dEER motif is present at residues 49–70 (RFLRKSRNPKDNLMLSEANEER). Positions 57–96 (PKDNLMLSEANEERTPSSPSNSLTEFIVSEPITTNVMRTE) are disordered. Over residues 87 to 96 (PITTNVMRTE) the composition is skewed to polar residues.

This sequence belongs to the RxLR effector family.

The protein resides in the secreted. Its subcellular location is the host nucleus. It localises to the host cytoplasm. In terms of biological role, secreted effector that dos not suppress the host cell death induced by cell death-inducing proteins. This is Secreted RxLR effector protein 123 from Plasmopara viticola (Downy mildew of grapevine).